Reading from the N-terminus, the 92-residue chain is Small ribosomal subunit protein uS19c (92 aa).

It belongs to the universal ribosomal protein uS19 family.

It is found in the plastid. The protein localises to the chloroplast. Functionally, protein S19 forms a complex with S13 that binds strongly to the 16S ribosomal RNA. This Dioscorea elephantipes (Elephant's foot yam) protein is Small ribosomal subunit protein uS19c.